We begin with the raw amino-acid sequence, 578 residues long: Protein LIKE EARLY STARVATION, chloroplastic (578 aa).

The transit peptide at 1–56 (MALRLGVSIGAALGSSHWDDGQRVRQRDFSASVNFTAPVTSRRSLRGSRTGVRILR) directs the protein to the chloroplast. Disordered stretches follow at residues 146–166 (NNSG…TSEV) and 187–206 (SETS…TPPQ).

This sequence belongs to the ESV1 family. Expressed ubiquitously.

The protein resides in the plastid. It is found in the chloroplast stroma. In terms of biological role, binds preferentially to highly ordered alpha-glucans, such as starch and crystalline maltodextrins. Involved in the organization of the starch granule matrix, thus influencing starch turnover by modulating the accessibility of starch polymers to modifying and degrading enzymes involved in phosphorylation, hydrolyzes and synthesis, including starch synthases (SSI and SSIII), starch phosphorylases (PHS1), isoamylase, beta-amylase, glucan water dikinase (GWD) and phosphoglucan water dikinase (PWD). In Arabidopsis thaliana (Mouse-ear cress), this protein is Protein LIKE EARLY STARVATION, chloroplastic.